The chain runs to 394 residues: Putative bacilysin exporter BacE (394 aa).

11 helical membrane-spanning segments follow: residues 11-31 (LLYG…ALLI), 43-63 (SGVI…GVLV), 69-89 (IKIM…LTFL), 92-112 (GEYP…GVFF), 142-162 (IIVG…ELAV), 166-186 (GVTY…FVPI), 215-235 (MFTM…FPIV), 244-264 (IGNF…AALV), 288-308 (LFLF…FFIA), 332-352 (IFSV…MFIN), and 353-373 (ILSA…LFLH).

It belongs to the major facilitator superfamily. Drug:H(+) antiporter-3 (DHA3) (TC 2.A.1.21) family.

Its subcellular location is the cell membrane. Part of the bacilysin biosynthesis operon. May be involved in self-resistance to bacilysin by permitting efflux of this antibiotic. The protein is Putative bacilysin exporter BacE (bacE) of Bacillus subtilis (strain 168).